Here is a 278-residue protein sequence, read N- to C-terminus: Tetraspanin-13 (278 aa).

Over 1–25 (MARDKEDQNNENPSIVQNMSFPFNT) the chain is Cytoplasmic. The helical transmembrane segment at 26–46 (IFLISSAIFLVTAAFWFVAVM) threads the bilayer. At 47–62 (TLHYRTDECNRFVTTP) the chain is on the extracellular side. A helical membrane pass occupies residues 63 to 83 (GIFISFSLLAMSLTGFYAAYF). Residues 84–92 (KSDCLFRIH) lie on the Cytoplasmic side of the membrane. A helical transmembrane segment spans residues 93 to 113 (FFIFFLWMFVVVSKAIFVIFL). Residues 114–249 (HKETNPRLFP…DVHNTSFSIT (136 aa)) are Extracellular-facing. N-linked (GlcNAc...) asparagine glycosylation is found at Asn-202, Asn-220, and Asn-243. A helical transmembrane segment spans residues 250–270 (VNIIHIIFSLCIGMTGWFAWL). At 271–278 (RILRESQK) the chain is on the cytoplasmic side.

Belongs to the tetraspanin (TM4SF) family.

It is found in the membrane. Functionally, may be involved in the regulation of cell differentiation. The polypeptide is Tetraspanin-13 (TET13) (Arabidopsis thaliana (Mouse-ear cress)).